A 286-amino-acid polypeptide reads, in one-letter code: Polyamine aminopropyltransferase (286 aa).

Residues 5-238 (TMWHETLHDQ…GIMTFAWATN (234 aa)) enclose the PABS domain. Position 33 (Gln-33) interacts with S-methyl-5'-thioadenosine. Spermidine-binding residues include His-64 and Asp-88. S-methyl-5'-thioadenosine-binding positions include Glu-108 and 140 to 141 (DG). Residue Asp-158 is the Proton acceptor of the active site. 158-161 (DCTD) is a binding site for spermidine. Pro-165 lines the S-methyl-5'-thioadenosine pocket.

The protein belongs to the spermidine/spermine synthase family. As to quaternary structure, homodimer or homotetramer.

It localises to the cytoplasm. The enzyme catalyses S-adenosyl 3-(methylsulfanyl)propylamine + putrescine = S-methyl-5'-thioadenosine + spermidine + H(+). The protein operates within amine and polyamine biosynthesis; spermidine biosynthesis; spermidine from putrescine: step 1/1. Functionally, catalyzes the irreversible transfer of a propylamine group from the amino donor S-adenosylmethioninamine (decarboxy-AdoMet) to putrescine (1,4-diaminobutane) to yield spermidine. The protein is Polyamine aminopropyltransferase of Salmonella paratyphi B (strain ATCC BAA-1250 / SPB7).